A 380-amino-acid polypeptide reads, in one-letter code: Queuine tRNA-ribosyltransferase (380 aa).

Asp-96 serves as the catalytic Proton acceptor. Substrate-binding positions include 96–100 (DSGGF), Asp-150, Gln-193, and Gly-220. The RNA binding stretch occupies residues 251–257 (GVGAPDS). The active-site Nucleophile is the Asp-270. The segment at 275–279 (TRIAR) is RNA binding; important for wobble base 34 recognition. Cys-308, Cys-310, Cys-313, and His-339 together coordinate Zn(2+).

The protein belongs to the queuine tRNA-ribosyltransferase family. Homodimer. Within each dimer, one monomer is responsible for RNA recognition and catalysis, while the other monomer binds to the replacement base PreQ1. Requires Zn(2+) as cofactor.

It catalyses the reaction 7-aminomethyl-7-carbaguanine + guanosine(34) in tRNA = 7-aminomethyl-7-carbaguanosine(34) in tRNA + guanine. Its pathway is tRNA modification; tRNA-queuosine biosynthesis. In terms of biological role, catalyzes the base-exchange of a guanine (G) residue with the queuine precursor 7-aminomethyl-7-deazaguanine (PreQ1) at position 34 (anticodon wobble position) in tRNAs with GU(N) anticodons (tRNA-Asp, -Asn, -His and -Tyr). Catalysis occurs through a double-displacement mechanism. The nucleophile active site attacks the C1' of nucleotide 34 to detach the guanine base from the RNA, forming a covalent enzyme-RNA intermediate. The proton acceptor active site deprotonates the incoming PreQ1, allowing a nucleophilic attack on the C1' of the ribose to form the product. After dissociation, two additional enzymatic reactions on the tRNA convert PreQ1 to queuine (Q), resulting in the hypermodified nucleoside queuosine (7-(((4,5-cis-dihydroxy-2-cyclopenten-1-yl)amino)methyl)-7-deazaguanosine). The protein is Queuine tRNA-ribosyltransferase of Streptococcus thermophilus (strain ATCC BAA-250 / LMG 18311).